A 110-amino-acid polypeptide reads, in one-letter code: Late cornified envelope-like proline-rich protein 1 (110 aa).

Residues Met-1 to Glu-24 form a disordered region.

Belongs to the cornifin (SPRR) family.

The sequence is that of Late cornified envelope-like proline-rich protein 1 (LELP1) from Bos taurus (Bovine).